Reading from the N-terminus, the 413-residue chain is Serine/threonine transporter SstT (413 aa).

Helical transmembrane passes span 21–41 (IGLLLGIIFALVSPSLESALG), 61–81 (SVAPILVFVLVIAAIANKKVG), 89–109 (IIYLYLIGTFLSALTAVFASF), 146–166 (ITALFNANFIGILAWAIGLGI), 189–209 (IVHFIISFAPIGVFGLVASTL), 224–244 (LAVLVGSMLFVAFVINPIIVF), 305–325 (MGGAAITITVLTLAAVFTLGI), 337–357 (LVASICACGASGVAGGSLLLI), and 363–383 (LFGISNDIAAQVIGVGFIIGV).

This sequence belongs to the dicarboxylate/amino acid:cation symporter (DAACS) (TC 2.A.23) family.

It localises to the cell inner membrane. The catalysed reaction is L-serine(in) + Na(+)(in) = L-serine(out) + Na(+)(out). It carries out the reaction L-threonine(in) + Na(+)(in) = L-threonine(out) + Na(+)(out). Involved in the import of serine and threonine into the cell, with the concomitant import of sodium (symport system). The protein is Serine/threonine transporter SstT of Mannheimia succiniciproducens (strain KCTC 0769BP / MBEL55E).